Consider the following 97-residue polypeptide: UstYa family oxidase VicYc (97 aa).

2 short sequence motifs (HXXHC) span residues 11 to 15 and 38 to 42; these read HELHC and HANHC.

It belongs to the ustYa family.

The protein operates within mycotoxin biosynthesis. UstYa family oxidase, part of the gene cluster that mediates the biosynthesis of the secondary metabolite victorin, the molecular basis for Victoria blight of oats. The role of vicYc within the pathway has still to be determined. The pathway starts with the processing of the precursor vicA1 by several endopeptidases including kexin proteases as well as the cluster-specific S28 family peptidases vicPa and vicPb to produce 7 identical copies of the hexapeptide Gly-Leu-Lys-Leu-Ala-Phe. After being excised from the precursor peptide, the core peptides are cyclized and modified post-translationally by enzymes encoded within the gene cluster. The ustYa family oxidase vicYb is required for the formation of the macrocycle in victorin and the copper amine oxidases (CAOs) vicK1 and vicK2 are responsible for converting victorin to the active form by oxidizing the N-terminal glycyl residue in the peptides to glyoxylate. Relaxed substrate specificity of enzymes in the victorin biosynthetic pathway results in a metabolic grid that produces a set of analogs including victorinines B, C, E or HV-toxin M. The chain is UstYa family oxidase VicYc from Bipolaris victoriae (strain FI3) (Victoria blight of oats agent).